Here is a 118-residue protein sequence, read N- to C-terminus: MARIAGINIPDQKHTVIALTSIYGIGKTRSQAICAAAGIAEHVKISELSEEQIDKLRDEVAKYVVEGDLRREVTLSIKRLMDLGTYRGLRHRRGLPVRGQRTKTNARTRKGPRKPIKK.

The segment at 91–118 is disordered; that stretch reads HRRGLPVRGQRTKTNARTRKGPRKPIKK.

It belongs to the universal ribosomal protein uS13 family. As to quaternary structure, part of the 30S ribosomal subunit. Forms a loose heterodimer with protein S19. Forms two bridges to the 50S subunit in the 70S ribosome.

Functionally, located at the top of the head of the 30S subunit, it contacts several helices of the 16S rRNA. In the 70S ribosome it contacts the 23S rRNA (bridge B1a) and protein L5 of the 50S subunit (bridge B1b), connecting the 2 subunits; these bridges are implicated in subunit movement. Contacts the tRNAs in the A and P-sites. The polypeptide is Small ribosomal subunit protein uS13 (Photorhabdus laumondii subsp. laumondii (strain DSM 15139 / CIP 105565 / TT01) (Photorhabdus luminescens subsp. laumondii)).